A 1087-amino-acid polypeptide reads, in one-letter code: A-kinase anchor protein 9 (1087 aa).

Residues 5 to 461 (EVQCQAEKVR…REREKMERIQ (457 aa)) are a coiled coil. Residues 559–572 (SLQKVLEEKVAAAL) form a PKA-RII subunit binding domain region. A coiled-coil region spans residues 614-773 (MESDVSALTW…SEKEDKTEVQ (160 aa)). Residues 667 to 685 (VQDSETKQRERERQSRLHG) show a composition bias toward basic and acidic residues. Positions 667-691 (VQDSETKQRERERQSRLHGDLGVLE) are disordered.

In terms of assembly, interacts with the regulatory region of protein kinase N (PKN), protein phosphatase 2A (PP2A), protein phosphatase 1 (PP1) and the immature non-phosphorylated form of PKC epsilon. Interacts with CIP4 and FNBP1. Interacts with chloride intracellular channel proteins CLIC1, CLIC4 and CLIC5. CSNK1D binding promotes its centrosomal subcellular location. Interacts with GM130/GOLGA2; leading to recruitment to the Golgi apparatus. Interacts with KCNQ1; targets protein kinase A (PKA) catalytic and regulatory subunits and protein phosphatase 1 (PP1), to the heterodimer KCNQ1-KCNE1. Interacts with PDE4DIP; this interaction stabilizes both proteins. In complex with PDE4DIP, recruits CAMSAP2 to the Golgi apparatus. Forms a pericentrosomal complex with CDK5RAP2, EB1/MAPRE1 and PDE4DIP; within this complex, MAPRE1 binding to CDK5RAP2 may be mediated by PDE4DIP. The interaction with PDE4DIP is isoform-specific. Interacts with MAPRE1 and MAPRE3. Interacts (via C-terminus) with CAMSAP2; this interaction is much stronger in the presence of PDE4DIP. Interacts with CAMSAP3. Interacts (via C-terminus) with the gamma-tubulin ring complex (gamma-TuRC), composed of gamma-tubulin, TUBGCP2, TUBGCP3, TUBGCP4, TUBGCP5 and TUBGCP6. In terms of tissue distribution, highly expressed in gastric parietal cells.

The protein localises to the golgi apparatus. The protein resides in the cytoplasm. It is found in the cytoskeleton. Its subcellular location is the microtubule organizing center. It localises to the centrosome. In terms of biological role, scaffolding protein that assembles several protein kinases and phosphatases on the centrosome and Golgi apparatus. Required to maintain the integrity of the Golgi apparatus. Required for microtubule nucleation at the cis-side of the Golgi apparatus. Required for association of the centrosomes with the poles of the bipolar mitotic spindle during metaphase. In complex with PDE4DIP, recruits CAMSAP2 to the Golgi apparatus and tethers non-centrosomal minus-end microtubules to the Golgi, an important step for polarized cell movement. In complex with PDE4DIP, EB1/MAPRE1 and CDK5RAP2, contributes to microtubules nucleation and extension also from the centrosome to the cell periphery. The interaction with PDE4DIP is isoform-specific. The protein is A-kinase anchor protein 9 (AKAP9) of Oryctolagus cuniculus (Rabbit).